The following is a 1293-amino-acid chain: Receptor-type tyrosine-protein phosphatase C (1293 aa).

Residues 1–25 (MTMGLWLKLLAFGFALLDTEVFVTG) form the signal peptide. Over 26 to 566 (QTPTPSDELS…RNESTNFNAK (541 aa)) the chain is Extracellular. Residues 43–174 (LPQSDPLPAR…STTDISSGAS (132 aa)) form a disordered region. Polar residues-rich tracts occupy residues 53–72 (TTESTPPSISERGNGSSETT), 88–110 (QPDSQTPSAGGADTQTFSSQADN), and 149–169 (LARNSSAASPTHTSNVSTTDI). N66 carries N-linked (GlcNAc...) asparagine glycosylation. 15 N-linked (GlcNAc...) asparagine glycosylation sites follow: N152, N163, N209, N213, N220, N255, N260, N292, N313, N324, N349, N418, N429, N459, and N491. Fibronectin type-III domains lie at 376-472 (IPET…TKAD) and 473-568 (RPDK…AKAL). The chain crosses the membrane as a helical span at residues 567-588 (ALIIFLVFLIIVTSIALLVVLY). Topologically, residues 589–1293 (KIYDLRKKRS…SASPAPTQSS (705 aa)) are cytoplasmic. Tyrosine-protein phosphatase domains lie at 642 to 901 (FLAE…LVEY) and 933 to 1216 (LEAE…IASI). The residue at position 672 (Y672) is a Phosphotyrosine. Substrate-binding positions include D810, 842-848 (CSAGVGR), and Q886. Catalysis depends on C842, which acts as the Phosphocysteine intermediate. S964, S983, S986, S990, S993, S994, and S998 each carry phosphoserine. A disordered region spans residues 980–1003 (LEMSKESEPESDESSDDDSDSEET). Positions 988–1001 (PESDESSDDDSDSE) are enriched in acidic residues. The active-site Phosphocysteine intermediate is the C1157. S1229 carries the post-translational modification Phosphoserine. Positions 1240–1293 (DGGKQDANCVRPDGPLNKAQEDSRGVGTPEPTNSAEEPEHAANGSASPAPTQSS) are disordered. T1267 is subject to Phosphothreonine. Residues 1283-1293 (GSASPAPTQSS) are compositionally biased toward polar residues. S1286 carries the phosphoserine modification.

The protein belongs to the protein-tyrosine phosphatase family. Receptor class 1/6 subfamily. Interacts with SKAP1. Interacts with DPP4; the interaction is enhanced in an interleukin-12-dependent manner in activated lymphocytes. Binds GANAB and PRKCSH. Interacts with CD53; this interaction stabilizes PTPRC on the membrane and is required for optimal phosphatase activity. Interacts with CLEC10A. In terms of processing, heavily N- and O-glycosylated.

It localises to the cell membrane. The protein resides in the membrane raft. It is found in the synapse. It carries out the reaction O-phospho-L-tyrosyl-[protein] + H2O = L-tyrosyl-[protein] + phosphate. Functionally, protein tyrosine-protein phosphatase required for T-cell activation through the antigen receptor. Acts as a positive regulator of T-cell coactivation upon binding to DPP4. The first PTPase domain has enzymatic activity, while the second one seems to affect the substrate specificity of the first one. Upon T-cell activation, recruits and dephosphorylates SKAP1 and FYN. Dephosphorylates LYN, and thereby modulates LYN activity. Interacts with CLEC10A at antigen presenting cell-T cell contact; CLEC10A on immature dendritic cells recognizes Tn antigen-carrying PTPRC/CD45 receptor on effector T cells and modulates T cell activation threshold to limit autoreactivity. The protein is Receptor-type tyrosine-protein phosphatase C of Mus musculus (Mouse).